The following is a 146-amino-acid chain: MORN repeat-containing protein 4 (146 aa).

MORN repeat units follow at residues 16–38 (YRGE…DGGT), 39–61 (YLGH…DGSR), 62–84 (YEGE…DNMT), and 85–107 (FEGE…DGSH).

Interacts with MYO3A.

It localises to the cytoplasm. Its subcellular location is the cell projection. The protein resides in the filopodium tip. The protein localises to the stereocilium. Plays a role in promoting axonal degeneration following neuronal injury by toxic insult or trauma. The polypeptide is MORN repeat-containing protein 4 (Morn4) (Rattus norvegicus (Rat)).